The chain runs to 356 residues: S-adenosylmethionine:tRNA ribosyltransferase-isomerase (356 aa).

It belongs to the QueA family. Monomer.

It localises to the cytoplasm. It carries out the reaction 7-aminomethyl-7-carbaguanosine(34) in tRNA + S-adenosyl-L-methionine = epoxyqueuosine(34) in tRNA + adenine + L-methionine + 2 H(+). The protein operates within tRNA modification; tRNA-queuosine biosynthesis. In terms of biological role, transfers and isomerizes the ribose moiety from AdoMet to the 7-aminomethyl group of 7-deazaguanine (preQ1-tRNA) to give epoxyqueuosine (oQ-tRNA). This chain is S-adenosylmethionine:tRNA ribosyltransferase-isomerase, found in Chromohalobacter salexigens (strain ATCC BAA-138 / DSM 3043 / CIP 106854 / NCIMB 13768 / 1H11).